The sequence spans 139 residues: Protein Turandot B (139 aa).

The first 21 residues, 1–21 (MNFKTALICFALLLIGTLCSA), serve as a signal peptide directing secretion.

This sequence belongs to the Turandot family.

The protein localises to the secreted. A humoral factor that may play a role in stress tolerance. The protein is Protein Turandot B of Drosophila simulans (Fruit fly).